The chain runs to 900 residues: DNA mismatch repair protein MutS (900 aa).

637 to 644 is a binding site for ATP; that stretch reads GPNMAGKS.

This sequence belongs to the DNA mismatch repair MutS family.

In terms of biological role, this protein is involved in the repair of mismatches in DNA. It is possible that it carries out the mismatch recognition step. This protein has a weak ATPase activity. The protein is DNA mismatch repair protein MutS of Methanosarcina mazei (strain ATCC BAA-159 / DSM 3647 / Goe1 / Go1 / JCM 11833 / OCM 88) (Methanosarcina frisia).